The sequence spans 464 residues: Soluble pyridine nucleotide transhydrogenase (464 aa).

35–44 (DSRRVVGGNC) contacts FAD.

Belongs to the class-I pyridine nucleotide-disulfide oxidoreductase family. Requires FAD as cofactor.

The protein resides in the cytoplasm. It catalyses the reaction NAD(+) + NADPH = NADH + NADP(+). In terms of biological role, conversion of NADPH, generated by peripheral catabolic pathways, to NADH, which can enter the respiratory chain for energy generation. The polypeptide is Soluble pyridine nucleotide transhydrogenase (Pseudomonas aeruginosa (strain LESB58)).